We begin with the raw amino-acid sequence, 534 residues long: ATP-dependent RNA helicase DBP3 (534 aa).

The interval M1–Q96 is disordered. Residues E8–E30 show a composition bias toward basic and acidic residues. A compositionally biased stretch (basic residues) spans K31 to K53. Residues E54–E63 are compositionally biased toward basic and acidic residues. The span at S82–S92 shows a compositional bias: low complexity. Positions L131–S157 match the Q motif motif. The Helicase ATP-binding domain occupies W160–V330. ATP is bound at residue A173–T180. The DEAD box motif lies at D278–D281. The Helicase C-terminal domain occupies R359–G504.

It belongs to the DEAD box helicase family. DDX5/DBP2 subfamily.

It is found in the nucleus. It localises to the nucleolus. It carries out the reaction ATP + H2O = ADP + phosphate + H(+). In terms of biological role, ATP-dependent RNA helicase required for 60S ribosomal subunit synthesis. Involved in efficient pre-rRNA processing, predominantly at site A3, which is necessary for the normal formation of 25S and 5.8S rRNAs. The protein is ATP-dependent RNA helicase DBP3 (DBP3) of Meyerozyma guilliermondii (strain ATCC 6260 / CBS 566 / DSM 6381 / JCM 1539 / NBRC 10279 / NRRL Y-324) (Yeast).